The sequence spans 262 residues: Outer membrane protein assembly factor BamD (262 aa).

The signal sequence occupies residues 1–18 (MRKIKSLALLAVAALVIG). Cys19 is lipidated: N-palmitoyl cysteine. Cys19 is lipidated: S-diacylglycerol cysteine.

It belongs to the BamD family. In terms of assembly, part of the Bam complex.

Its subcellular location is the cell outer membrane. In terms of biological role, part of the outer membrane protein assembly complex, which is involved in assembly and insertion of beta-barrel proteins into the outer membrane. This is Outer membrane protein assembly factor BamD from Haemophilus influenzae (strain ATCC 51907 / DSM 11121 / KW20 / Rd).